The primary structure comprises 89 residues: MSLSVEAKAKIVADFGRGTNDSGSTEVQVALLTAQINHLQGHFSEHKKDHHSRRGLLRMVSQRRKLLDYLKRKDVARYTSLIARLGLRR.

The protein belongs to the universal ribosomal protein uS15 family. Part of the 30S ribosomal subunit. Forms a bridge to the 50S subunit in the 70S ribosome, contacting the 23S rRNA.

Functionally, one of the primary rRNA binding proteins, it binds directly to 16S rRNA where it helps nucleate assembly of the platform of the 30S subunit by binding and bridging several RNA helices of the 16S rRNA. Forms an intersubunit bridge (bridge B4) with the 23S rRNA of the 50S subunit in the ribosome. The polypeptide is Small ribosomal subunit protein uS15 (Pectobacterium atrosepticum (strain SCRI 1043 / ATCC BAA-672) (Erwinia carotovora subsp. atroseptica)).